Reading from the N-terminus, the 713-residue chain is RNA-binding protein vts1 (713 aa).

The segment covering 154–188 (NSGLSLDKSLPSSPKGDSPSLSSSLPSLTTKSNLS) has biased composition (low complexity). 5 disordered regions span residues 154–208 (NSGL…SSKH), 254–336 (EPPA…RDRG), 356–389 (DESS…SRPL), 554–596 (EKIE…GNEL), and 667–713 (KAAK…SSMD). Composition is skewed to polar residues over residues 189–208 (GNLN…SSKH) and 258–281 (SSAS…NANV). Low complexity-rich tracts occupy residues 282–297 (TSSL…SKTT) and 304–320 (SKKS…PNTS). A compositionally biased stretch (polar residues) spans 321–330 (FFETPHNNIW). Positions 369–378 (SPPPPPPPPE) are enriched in pro residues. Over residues 559-569 (PPNNSKNQTYR) the composition is skewed to polar residues. Over residues 570 to 583 (RSSRGSNKTRKSIS) the composition is skewed to basic residues. Residues 595–656 (ELPQDIPSWL…LKSFQEVAPL (62 aa)) enclose the SAM domain. A compositionally biased stretch (polar residues) spans 670 to 681 (KNQSSESLTSFK). Phosphoserine is present on serine 673. The segment covering 691-702 (SGSMSNEISSNS) has biased composition (low complexity). A compositionally biased stretch (polar residues) spans 703–713 (TKQDVSSSSMD).

This sequence belongs to the VTS1 family. As to quaternary structure, monomer. Binds to RNA.

Its subcellular location is the cytoplasm. It is found in the cytosol. It localises to the P-body. Functionally, RNA-binding protein involved in post-transcriptional regulation through transcript degradation. The protein is RNA-binding protein vts1 of Schizosaccharomyces pombe (strain 972 / ATCC 24843) (Fission yeast).